The following is a 260-amino-acid chain: ProSAAS (260 aa).

An N-terminal signal peptide occupies residues 1-33 (MAGSPLLCGPRAGGVGLLVLLLLGLLRLPPTLS). The segment at 34–215 (ARPVKEPRSL…SSEPEAAPAP (182 aa)) is proSAAS(1-180). Disordered regions lie at residues 162 to 187 (AALR…ADET) and 206 to 234 (SSEP…PPEN). A C-terminal inhibitory domain; interacts with PCSK1 region spans residues 221–260 (AVDQDLGPEVPPENVLGALLRVKRLENSSPQAPARRLLPP). The short motif at 239–244 (LLRVKR) is the Sufficient for inhibition of PCSK1 element.

As to quaternary structure, interacts via the C-terminal inhibitory domain with PCSK1 65 kDa form. Proteolytically cleaved in the Golgi. Big SAAS, Little SAAS, PEN and Big LEN are the major processed peptides in proSAAS-overexpressing PC-12 phaeochromocytoma cells (lacking PCSK1 and PCSK2 endopeptidases). Peptides corresponding to PEN and a proSAAS aa 40-59 have been detected in wild-type PC-12 cells. Expressed in adult brain (all major structural regions), adrenal gland (medulla) and spinal cord (dorsal and ventral horn). Expressed in pancreatic islands.

The protein resides in the secreted. Its subcellular location is the golgi apparatus. The protein localises to the trans-Golgi network. May function in the control of the neuroendocrine secretory pathway. Proposed be a specific endogenous inhibitor of PCSK1. ProSAAS and Big PEN-LEN, both containing the C-terminal inhibitory domain, but not the processed peptides reduce PCSK1 activity in the endoplasmic reticulum and Golgi. It reduces the activity of the 87 kDa form but not the autocatalytically derived 65 kDa form of PCSK1. Subsequent processing of proSAAS may eliminate the inhibition. Slows down convertase-mediated processing of proopiomelanocortin and proenkephalin. May control the intracellular timing of PCSK1 rather than its total level of activity. Its function is as follows. Endogenous ligand for GPR171. Neuropeptide involved in the regulation of feeding. In Rattus norvegicus (Rat), this protein is ProSAAS (Pcsk1n).